A 220-amino-acid chain; its full sequence is Ribose-5-phosphate isomerase A (220 aa).

Residues Thr-25–Thr-28, Asp-80–Asp-83, and Lys-93–Gly-96 each bind substrate. Catalysis depends on Glu-102, which acts as the Proton acceptor. Lys-120 lines the substrate pocket.

Belongs to the ribose 5-phosphate isomerase family. Homodimer.

It carries out the reaction aldehydo-D-ribose 5-phosphate = D-ribulose 5-phosphate. The protein operates within carbohydrate degradation; pentose phosphate pathway; D-ribose 5-phosphate from D-ribulose 5-phosphate (non-oxidative stage): step 1/1. Functionally, catalyzes the reversible conversion of ribose-5-phosphate to ribulose 5-phosphate. In Bacillus cereus (strain ZK / E33L), this protein is Ribose-5-phosphate isomerase A.